Reading from the N-terminus, the 228-residue chain is 2-C-methyl-D-erythritol 4-phosphate cytidylyltransferase (228 aa).

It belongs to the IspD/TarI cytidylyltransferase family. IspD subfamily.

The enzyme catalyses 2-C-methyl-D-erythritol 4-phosphate + CTP + H(+) = 4-CDP-2-C-methyl-D-erythritol + diphosphate. The protein operates within isoprenoid biosynthesis; isopentenyl diphosphate biosynthesis via DXP pathway; isopentenyl diphosphate from 1-deoxy-D-xylulose 5-phosphate: step 2/6. Functionally, catalyzes the formation of 4-diphosphocytidyl-2-C-methyl-D-erythritol from CTP and 2-C-methyl-D-erythritol 4-phosphate (MEP). The chain is 2-C-methyl-D-erythritol 4-phosphate cytidylyltransferase from Dechloromonas aromatica (strain RCB).